A 347-amino-acid polypeptide reads, in one-letter code: NAD-dependent alcohol dehydrogenase (347 aa).

At Lys11 the chain carries N6-methyllysine. Cys38, His68, Glu98, Cys101, Cys104, Cys112, and Cys154 together coordinate Zn(2+). N6-methyllysine is present on Lys213.

Belongs to the zinc-containing alcohol dehydrogenase family. As to quaternary structure, homodimer and homotetramer. The cofactor is Zn(2+).

The enzyme catalyses a primary alcohol + NAD(+) = an aldehyde + NADH + H(+). It carries out the reaction a secondary alcohol + NAD(+) = a ketone + NADH + H(+). In Sulfurisphaera tokodaii (strain DSM 16993 / JCM 10545 / NBRC 100140 / 7) (Sulfolobus tokodaii), this protein is NAD-dependent alcohol dehydrogenase (adh).